Here is a 143-residue protein sequence, read N- to C-terminus: Large ribosomal subunit protein uL11 (143 aa).

It belongs to the universal ribosomal protein uL11 family. In terms of assembly, part of the ribosomal stalk of the 50S ribosomal subunit. Interacts with L10 and the large rRNA to form the base of the stalk. L10 forms an elongated spine to which L12 dimers bind in a sequential fashion forming a multimeric L10(L12)X complex. One or more lysine residues are methylated.

Its function is as follows. Forms part of the ribosomal stalk which helps the ribosome interact with GTP-bound translation factors. This chain is Large ribosomal subunit protein uL11, found in Burkholderia mallei (strain NCTC 10247).